We begin with the raw amino-acid sequence, 210 residues long: Thiamine-phosphate synthase (210 aa).

Residues 36-40 (QLREK) and N68 each bind 4-amino-2-methyl-5-(diphosphooxymethyl)pyrimidine. 2 residues coordinate Mg(2+): D69 and D88. Position 107 (S107) interacts with 4-amino-2-methyl-5-(diphosphooxymethyl)pyrimidine. 133–135 (TGS) serves as a coordination point for 2-[(2R,5Z)-2-carboxy-4-methylthiazol-5(2H)-ylidene]ethyl phosphate. A 4-amino-2-methyl-5-(diphosphooxymethyl)pyrimidine-binding site is contributed by K136. 2-[(2R,5Z)-2-carboxy-4-methylthiazol-5(2H)-ylidene]ethyl phosphate is bound by residues G164 and 184–185 (IS).

Belongs to the thiamine-phosphate synthase family. The cofactor is Mg(2+).

It catalyses the reaction 2-[(2R,5Z)-2-carboxy-4-methylthiazol-5(2H)-ylidene]ethyl phosphate + 4-amino-2-methyl-5-(diphosphooxymethyl)pyrimidine + 2 H(+) = thiamine phosphate + CO2 + diphosphate. The catalysed reaction is 2-(2-carboxy-4-methylthiazol-5-yl)ethyl phosphate + 4-amino-2-methyl-5-(diphosphooxymethyl)pyrimidine + 2 H(+) = thiamine phosphate + CO2 + diphosphate. The enzyme catalyses 4-methyl-5-(2-phosphooxyethyl)-thiazole + 4-amino-2-methyl-5-(diphosphooxymethyl)pyrimidine + H(+) = thiamine phosphate + diphosphate. It functions in the pathway cofactor biosynthesis; thiamine diphosphate biosynthesis; thiamine phosphate from 4-amino-2-methyl-5-diphosphomethylpyrimidine and 4-methyl-5-(2-phosphoethyl)-thiazole: step 1/1. In terms of biological role, condenses 4-methyl-5-(beta-hydroxyethyl)thiazole monophosphate (THZ-P) and 2-methyl-4-amino-5-hydroxymethyl pyrimidine pyrophosphate (HMP-PP) to form thiamine monophosphate (TMP). The chain is Thiamine-phosphate synthase from Moorella thermoacetica (strain ATCC 39073 / JCM 9320).